The primary structure comprises 326 residues: N-acetyl-gamma-glutamyl-phosphate reductase (326 aa).

Residue cysteine 155 is part of the active site.

It belongs to the NAGSA dehydrogenase family. Type 1 subfamily.

Its subcellular location is the cytoplasm. It carries out the reaction N-acetyl-L-glutamate 5-semialdehyde + phosphate + NADP(+) = N-acetyl-L-glutamyl 5-phosphate + NADPH + H(+). Its pathway is amino-acid biosynthesis; L-arginine biosynthesis; N(2)-acetyl-L-ornithine from L-glutamate: step 3/4. Functionally, catalyzes the NADPH-dependent reduction of N-acetyl-5-glutamyl phosphate to yield N-acetyl-L-glutamate 5-semialdehyde. In Shewanella sp. (strain MR-4), this protein is N-acetyl-gamma-glutamyl-phosphate reductase.